We begin with the raw amino-acid sequence, 576 residues long: 3-hydroxy-3-methylglutaryl coenzyme A reductase 1 (576 aa).

Residues 1 to 35 (MDSRRRPSKPLLTSSGEVLHRKQASPVTDEDQIHR) are disordered. The next 2 membrane-spanning stretches (helical) occupy residues 42–62 (ALPL…FSVA) and 89–109 (AIVS…IDFV). Glu-255 (charge relay system) is an active-site residue. N-linked (GlcNAc...) asparagine glycosylation occurs at Asn-319. Active-site charge relay system residues include Lys-387 and Asp-463. A helical membrane pass occupies residues 532–552 (LLATIVAGSVLAGELSLMSAI). His-561 serves as the catalytic Proton donor. An N-linked (GlcNAc...) asparagine glycan is attached at Asn-565.

The protein belongs to the HMG-CoA reductase family. In terms of tissue distribution, expressed in trichomes, leaves, flowers, roots and stems.

It localises to the endoplasmic reticulum membrane. The protein localises to the plastid. Its subcellular location is the chloroplast membrane. It is found in the peroxisome membrane. It carries out the reaction (R)-mevalonate + 2 NADP(+) + CoA = (3S)-3-hydroxy-3-methylglutaryl-CoA + 2 NADPH + 2 H(+). It participates in metabolic intermediate biosynthesis; (R)-mevalonate biosynthesis; (R)-mevalonate from acetyl-CoA: step 3/3. Catalyzes the synthesis of mevalonate, the specific precursor of all isoprenoid compounds present in plants. Component of the triterpene saponins (e.g. ginsenosides or panaxosides) and phytosterols biosynthetic pathways. Promotes triterpenes accumulation in roots. This chain is 3-hydroxy-3-methylglutaryl coenzyme A reductase 1, found in Cannabis sativa (Hemp).